The following is a 276-amino-acid chain: CDP-diacylglycerol--serine O-phosphatidyltransferase (276 aa).

The disordered stretch occupies residues 1-21 (MVESDEDFAPQEFPHTDTDVI). Residues Ser-4, Ser-34, Ser-42, Ser-46, Ser-47, and Ser-50 each carry the phosphoserine modification. 4 consecutive transmembrane segments (helical) span residues 82-102 (MADYITMLNGFSGFYSIVSCL), 163-183 (IAFAIGFQTTFDVMILSFFVL), 210-230 (YFEGLPMPTTLALVLGMAYCV), and 248-268 (QILEFHPIILVFFIHGCGMIS).

This sequence belongs to the CDP-alcohol phosphatidyltransferase class-I family. Mn(2+) is required as a cofactor. It depends on Mg(2+) as a cofactor.

Its subcellular location is the microsome membrane. The protein localises to the endoplasmic reticulum membrane. It localises to the mitochondrion outer membrane. The enzyme catalyses a CDP-1,2-diacyl-sn-glycerol + L-serine = a 1,2-diacyl-sn-glycero-3-phospho-L-serine + CMP + H(+). It participates in phospholipid metabolism; phosphatidylethanolamine biosynthesis; phosphatidylethanolamine from CDP-diacylglycerol: step 1/2. In terms of biological role, catalyzes the synthesis of phosphatidylserine (PtdSer). This chain is CDP-diacylglycerol--serine O-phosphatidyltransferase (CHO1), found in Saccharomyces cerevisiae (strain ATCC 204508 / S288c) (Baker's yeast).